The sequence spans 524 residues: Chromosomal replication initiator protein DnaA (524 aa).

The tract at residues 1–85 (MSQNSSSLLE…TRVLSLRMGR (85 aa)) is domain I, interacts with DnaA modulators. The domain II stretch occupies residues 85–182 (RSFSLAVSVE…TPAHNPNREV (98 aa)). A disordered region spans residues 95–183 (PEQEIPETPA…PAHNPNREVS (89 aa)). Over residues 148–158 (APEPHPAPIAD) the composition is skewed to pro residues. Residues 183-399 (SLNPKYTFES…GALIRVSAYS (217 aa)) are domain III, AAA+ region. G227, G229, K230, and T231 together coordinate ATP. A domain IV, binds dsDNA region spans residues 400–524 (SLINQPIDKE…TQLIKSRGRN (125 aa)).

It belongs to the DnaA family. Oligomerizes as a right-handed, spiral filament on DNA at oriC.

The protein localises to the cytoplasm. Plays an essential role in the initiation and regulation of chromosomal replication. ATP-DnaA binds to the origin of replication (oriC) to initiate formation of the DNA replication initiation complex once per cell cycle. Binds the DnaA box (a 9 base pair repeat at the origin) and separates the double-stranded (ds)DNA. Forms a right-handed helical filament on oriC DNA; dsDNA binds to the exterior of the filament while single-stranded (ss)DNA is stabiized in the filament's interior. The ATP-DnaA-oriC complex binds and stabilizes one strand of the AT-rich DNA unwinding element (DUE), permitting loading of DNA polymerase. After initiation quickly degrades to an ADP-DnaA complex that is not apt for DNA replication. Binds acidic phospholipids. In Corynebacterium glutamicum (strain ATCC 13032 / DSM 20300 / JCM 1318 / BCRC 11384 / CCUG 27702 / LMG 3730 / NBRC 12168 / NCIMB 10025 / NRRL B-2784 / 534), this protein is Chromosomal replication initiator protein DnaA.